A 427-amino-acid polypeptide reads, in one-letter code: Mucorpepsin (427 aa).

Residues 1–22 form the signal peptide; it reads MLFSKISSAILLTAASFALTSA. The propeptide at 23–66 is activation peptide; that stretch reads RPVSKQSDADDKLLALPLTSVNRKYSQTKHGQQAAEKLGGIKAF. Residues 86 to 418 enclose the Peptidase A1 domain; sequence YAIPVSIGTP…DFGKNRIGFA (333 aa). The active site involves D104. A disulfide bridge connects residues C117 and C123. N254 carries an N-linked (GlcNAc...) asparagine glycan. Residue D303 is part of the active site. C338 and C382 form a disulfide bridge.

Belongs to the peptidase A1 family.

The enzyme catalyses Hydrolysis of proteins, favoring hydrophobic residues at P1 and P1'. Clots milk. Does not accept Lys at P1, and hence does not activate trypsinogen.. Its function is as follows. This enzyme, capable of clotting milk is frequently used for cheese production. This is Mucorpepsin from Rhizomucor pusillus.